Reading from the N-terminus, the 243-residue chain is MVMEPKKNQNLPSFLNPSRQNQDNDKKRKQTEVKGFDIVVGEKRKKKENEEEDQEIQILYEKEKKKPNKDRHLKVEGRGRRVRLPPLCAARIYQLTKELGHKSDGETLEWLLQHAEPSILSATVNGIKPTESVVSQPPLTADLMICHSVEEASRTQMEANGLWRNETGQTIGGFDLNYGIGFDFNGVPEIGFGDNQTPGLELRLSQVGVLNPQVFQQMGKEQFRVLHHHSHEDQQQSAEENGS.

Residues 1-55 (MVMEPKKNQNLPSFLNPSRQNQDNDKKRKQTEVKGFDIVVGEKRKKKENEEEDQE) form a disordered region. Polar residues predominate over residues 8-21 (NQNLPSFLNPSRQN). The span at 22–35 (QDNDKKRKQTEVKG) shows a compositional bias: basic and acidic residues. Positions 42 to 66 (EKRKKKENEEEDQEIQILYEKEKKK) form a coiled coil. Residues 68 to 122 (NKDRHLKVEGRGRRVRLPPLCAARIYQLTKELGHKSDGETLEWLLQHAEPSILSA) enclose the TCP domain.

As to quaternary structure, interacts with SPL.

The protein resides in the nucleus. This is Transcription factor TCP6 (TCP6) from Arabidopsis thaliana (Mouse-ear cress).